A 65-amino-acid chain; its full sequence is Large ribosomal subunit protein bL35 (65 aa).

The tract at residues 1–52 (MPKIKTNRGAAKRFKRTGSGGFKCVQSHRRHILTKKSTKRKRQLRSPDMVHP) is disordered. Residues 26–44 (QSHRRHILTKKSTKRKRQL) are compositionally biased toward basic residues.

Belongs to the bacterial ribosomal protein bL35 family.

This Methylococcus capsulatus (strain ATCC 33009 / NCIMB 11132 / Bath) protein is Large ribosomal subunit protein bL35.